The primary structure comprises 419 residues: UDP-N-acetylmuramoylalanine--D-glutamate ligase (419 aa).

109–115 (GSTGKTT) contacts ATP.

Belongs to the MurCDEF family.

It localises to the cytoplasm. It catalyses the reaction UDP-N-acetyl-alpha-D-muramoyl-L-alanine + D-glutamate + ATP = UDP-N-acetyl-alpha-D-muramoyl-L-alanyl-D-glutamate + ADP + phosphate + H(+). It participates in cell wall biogenesis; peptidoglycan biosynthesis. Its function is as follows. Cell wall formation. Catalyzes the addition of glutamate to the nucleotide precursor UDP-N-acetylmuramoyl-L-alanine (UMA). The sequence is that of UDP-N-acetylmuramoylalanine--D-glutamate ligase from Chlamydia felis (strain Fe/C-56) (Chlamydophila felis).